The sequence spans 399 residues: ATP-dependent RNA helicase fal1 (399 aa).

Residues 25–53 (PTFQDMHLKENLLRGIYAYGYESPSAVQS) carry the Q motif motif. The 171-residue stretch at 56–226 (IVQICKGRDT…TKFMTDPVRI (171 aa)) folds into the Helicase ATP-binding domain. 69–76 (AQSGTGKT) provides a ligand contact to ATP. Residues 174–177 (DEAD) carry the DEAD box motif. Residues 237–398 (GLKQYFIAVE…EMPMNVADLL (162 aa)) enclose the Helicase C-terminal domain.

This sequence belongs to the DEAD box helicase family. DDX48/FAL1 subfamily.

The protein localises to the nucleus. It localises to the nucleolus. The enzyme catalyses ATP + H2O = ADP + phosphate + H(+). Its function is as follows. ATP-dependent RNA helicase involved in 40S ribosomal subunit biogenesis. Required for the processing and cleavage of 35S pre-rRNA at sites A0, A1, and A2, leading to mature 18S rRNA. The polypeptide is ATP-dependent RNA helicase fal1 (fal1) (Botryotinia fuckeliana (strain B05.10) (Noble rot fungus)).